We begin with the raw amino-acid sequence, 81 residues long: MGKKRVTDHKLNVDKVIKNINTISSELKKIKELSQLLLCDLILHFNHPIKTENLAEAERNNPLFEESKISDVSLVSNSFSI.

This is an uncharacterized protein from Homo sapiens (Human).